Reading from the N-terminus, the 172-residue chain is Large ribosomal subunit protein uL10 (172 aa).

It belongs to the universal ribosomal protein uL10 family. Part of the ribosomal stalk of the 50S ribosomal subunit. The N-terminus interacts with L11 and the large rRNA to form the base of the stalk. The C-terminus forms an elongated spine to which L12 dimers bind in a sequential fashion forming a multimeric L10(L12)X complex.

Functionally, forms part of the ribosomal stalk, playing a central role in the interaction of the ribosome with GTP-bound translation factors. The polypeptide is Large ribosomal subunit protein uL10 (Mesorhizobium japonicum (strain LMG 29417 / CECT 9101 / MAFF 303099) (Mesorhizobium loti (strain MAFF 303099))).